Here is a 254-residue protein sequence, read N- to C-terminus: Low affinity immunoglobulin gamma Fc region receptor III-A (254 aa).

The signal sequence occupies residues 1-20; sequence MWQLLLPTALLLLVSAGMRA. The Extracellular portion of the chain corresponds to 21 to 206; sequence EDLPKAVVFL…SSISSFFPPG (186 aa). Ig-like C2-type domains lie at 24 to 105 and 107 to 189; these read PKAV…LEVH and GWLL…VNIT. Cystine bridges form between Cys-47-Cys-89 and Cys-128-Cys-172. The N-linked (GlcNAc...) asparagine glycan is linked to Asn-187. Residues 207–229 traverse the membrane as a helical segment; it reads YQVSFCLVMVLLFAVDTGLYFSV. Over 230-254 the chain is Cytoplasmic; that stretch reads KKSVPSSTRDWEDHKFKWSKDPQDK.

Forms a heterooligomeric complex with ITAM-containing signaling subunits, either a homodimer of CD247, a homodimer of FCER1G or a heterodimer of CD247 and FCER1G, to form a functional receptor complex. Interacts (via transmembrane domain) with signaling subunits; this interaction is a prerequisite for receptor complex expression on the cell surface and intracellular signal transduction. Binds the Fc region of antigen-complexed IgG with a preference for IgG1 and IgG3 isotypes. Interacts with CD2; this interaction is involved in NK cell activation and cytotoxicity. Interacts with S100A4; this interaction inhibits PKC-dependent phosphorylation of FCGR3A. Glycosylated. Glycosylation plays an inhibitory role in the interaction with IgG1 and IgG2. Post-translationally, undergoes rapid ectodomain shedding upon NK cell stimulation. The soluble form is produced by a proteolytic cleavage mediated by ADAM17. Repeated stimulation causes receptor shedding, a mechanism that allows for increased NK cell motility and detachment from opsonized target cells while avoiding activation-induced NK cell apoptosis. Lymphocytes and monocytes.

The protein localises to the cell membrane. It localises to the secreted. In terms of biological role, receptor for the invariable Fc fragment of immunoglobulin gamma (IgG). Optimally activated upon binding of clustered antigen-IgG complexes displayed on cell surfaces, triggers lysis of antibody-coated cells, a process known as antibody-dependent cellular cytotoxicity (ADCC). Does not bind free monomeric IgG, thus avoiding inappropriate effector cell activation in the absence of antigenic trigger. Mediates IgG effector functions on natural killer (NK) cells. Binds antigen-IgG complexes generated upon infection and triggers NK cell-dependent cytokine production and degranulation to limit viral load and propagation. Involved in the generation of memory-like adaptive NK cells capable to produce high amounts of IFNG and to efficiently eliminate virus-infected cells via ADCC. Regulates NK cell survival and proliferation, in particular by preventing NK cell progenitor apoptosis. Fc-binding subunit that associates with CD247 and/or FCER1G adapters to form functional signaling complexes. Following the engagement of antigen-IgG complexes, triggers phosphorylation of immunoreceptor tyrosine-based activation motif (ITAM)-containing adapters with subsequent activation of phosphatidylinositol 3-kinase signaling and sustained elevation of intracellular calcium that ultimately drive NK cell activation. The ITAM-dependent signaling coupled to receptor phosphorylation by PKC mediates robust intracellular calcium flux that leads to production of pro-inflammatory cytokines, whereas in the absence of receptor phosphorylation it mainly activates phosphatidylinositol 3-kinase signaling leading to cell degranulation. Costimulates NK cells and trigger lysis of target cells independently of IgG binding. Mediates the antitumor activities of therapeutic antibodies. Upon ligation on monocytes triggers TNFA-dependent ADCC of IgG-coated tumor cells. Mediates enhanced ADCC in response to afucosylated IgGs. The chain is Low affinity immunoglobulin gamma Fc region receptor III-A from Macaca mulatta (Rhesus macaque).